Consider the following 189-residue polypeptide: Interferon alpha-14 (189 aa).

The N-terminal stretch at 1-23 is a signal peptide; the sequence is MALPFALMMALVVLSCKSSCSLG. 2 disulfides stabilise this stretch: C24–C122 and C52–C162. N-linked (GlcNAc...) asparagine glycosylation occurs at N95.

The protein belongs to the alpha/beta interferon family.

The protein localises to the secreted. Functionally, produced by macrophages, IFN-alpha have antiviral activities. Interferon stimulates the production of two enzymes: a protein kinase and an oligoadenylate synthetase. The protein is Interferon alpha-14 (IFNA14) of Homo sapiens (Human).